The sequence spans 359 residues: CMP-N-acetylneuraminate-poly-alpha-2,8-sialyltransferase (359 aa).

Residues 1-7 (MRSIRKR) are Cytoplasmic-facing. A helical; Signal-anchor for type II membrane protein transmembrane segment spans residues 8 to 20 (WTICTISLLLIFY). The Lumenal segment spans residues 21–359 (KTKEIARTEE…KLTTGKCMKQ (339 aa)). N50, N74, and N119 each carry an N-linked (GlcNAc...) asparagine glycan. 2 cysteine pairs are disulfide-bonded: C142–C292 and C156–C356. CMP-N-acetyl-beta-neuraminate-binding residues include N147 and N170. N-linked (GlcNAc...) asparagine glycans are attached at residues N204 and N219. S279, T280, G281, and W301 together coordinate CMP-N-acetyl-beta-neuraminate. The Proton donor/acceptor role is filled by H331.

It belongs to the glycosyltransferase 29 family. Autopolysialylated.

It localises to the golgi apparatus membrane. The protein resides in the secreted. It catalyses the reaction [N-acetyl-alpha-D-neuraminosyl-(2-&gt;8)](n) + CMP-N-acetyl-beta-neuraminate = [N-acetyl-alpha-D-neuraminosyl-(2-&gt;8)](n+1) + CMP + H(+). Its pathway is protein modification; protein glycosylation. Its function is as follows. Catalyzes the transfer of a sialic acid from a CMP-linked sialic acid donor onto a terminal alpha-2,3-, alpha-2,6-, or alpha-2,8-linked sialic acid of an N-linked glycan protein acceptor through alpha-2,8-linkages. Therefore, participates in polysialic acid synthesis on various sialylated N-acetyllactosaminyl oligosaccharides, including NCAM1 N-glycans, FETUB N-glycans and AHSG. It is noteworthy that alpha-2,3-linked sialic acid is apparently a better acceptor than alpha-2,6-linked sialic acid. The polypeptide is CMP-N-acetylneuraminate-poly-alpha-2,8-sialyltransferase (Cricetulus griseus (Chinese hamster)).